Here is a 212-residue protein sequence, read N- to C-terminus: NAD(P)H-hydrate epimerase (212 aa).

Positions methionine 11–aspartate 212 constitute a YjeF N-terminal domain. Asparagine 60 to aspartate 64 contributes to the (6S)-NADPHX binding site. Asparagine 61 and aspartate 123 together coordinate K(+). (6S)-NADPHX-binding positions include glycine 127–alanine 133, tyrosine 138, and aspartate 156. A K(+)-binding site is contributed by serine 159.

Belongs to the NnrE/AIBP family. K(+) is required as a cofactor.

The catalysed reaction is (6R)-NADHX = (6S)-NADHX. It catalyses the reaction (6R)-NADPHX = (6S)-NADPHX. Its function is as follows. Catalyzes the epimerization of the S- and R-forms of NAD(P)HX, a damaged form of NAD(P)H that is a result of enzymatic or heat-dependent hydration. This is a prerequisite for the S-specific NAD(P)H-hydrate dehydratase to allow the repair of both epimers of NAD(P)HX. This chain is NAD(P)H-hydrate epimerase, found in Limosilactobacillus reuteri (strain DSM 20016) (Lactobacillus reuteri).